Reading from the N-terminus, the 125-residue chain is Ribosome-binding factor A (125 aa).

This sequence belongs to the RbfA family. In terms of assembly, monomer. Binds 30S ribosomal subunits, but not 50S ribosomal subunits or 70S ribosomes.

The protein localises to the cytoplasm. In terms of biological role, one of several proteins that assist in the late maturation steps of the functional core of the 30S ribosomal subunit. Associates with free 30S ribosomal subunits (but not with 30S subunits that are part of 70S ribosomes or polysomes). Required for efficient processing of 16S rRNA. May interact with the 5'-terminal helix region of 16S rRNA. The sequence is that of Ribosome-binding factor A from Fervidobacterium nodosum (strain ATCC 35602 / DSM 5306 / Rt17-B1).